The primary structure comprises 931 residues: Bifunctional glutamine synthetase adenylyltransferase/adenylyl-removing enzyme (931 aa).

An adenylyl removase region spans residues 1–434; that stretch reads MTLAPADLPA…STEFAALLAP (434 aa). The segment at 441–931 is adenylyl transferase; it reads PDALANYWRS…ACIAAELPFA (491 aa).

It belongs to the GlnE family. Mg(2+) serves as cofactor.

It catalyses the reaction [glutamine synthetase]-O(4)-(5'-adenylyl)-L-tyrosine + phosphate = [glutamine synthetase]-L-tyrosine + ADP. The catalysed reaction is [glutamine synthetase]-L-tyrosine + ATP = [glutamine synthetase]-O(4)-(5'-adenylyl)-L-tyrosine + diphosphate. In terms of biological role, involved in the regulation of glutamine synthetase GlnA, a key enzyme in the process to assimilate ammonia. When cellular nitrogen levels are high, the C-terminal adenylyl transferase (AT) inactivates GlnA by covalent transfer of an adenylyl group from ATP to specific tyrosine residue of GlnA, thus reducing its activity. Conversely, when nitrogen levels are low, the N-terminal adenylyl removase (AR) activates GlnA by removing the adenylyl group by phosphorolysis, increasing its activity. The regulatory region of GlnE binds the signal transduction protein PII (GlnB) which indicates the nitrogen status of the cell. The chain is Bifunctional glutamine synthetase adenylyltransferase/adenylyl-removing enzyme from Stenotrophomonas maltophilia (strain R551-3).